A 358-amino-acid chain; its full sequence is Heme A synthase (358 aa).

Helical transmembrane passes span 22-42 (IQVW…VGGA), 107-127 (ILGR…WATK), 139-159 (IVPI…ASGI), 173-193 (AFHL…SRGF), 208-228 (FAGW…LVAG), 269-289 (FIHR…AFYV), 302-322 (AFFI…TLLR), and 324-344 (VPIG…CFSV). Histidine 271 is a heme binding site. Histidine 332 serves as a coordination point for heme.

Belongs to the COX15/CtaA family. Type 2 subfamily. In terms of assembly, interacts with CtaB. The cofactor is heme b.

It is found in the cell membrane. It carries out the reaction Fe(II)-heme o + 2 A + H2O = Fe(II)-heme a + 2 AH2. Its pathway is porphyrin-containing compound metabolism; heme A biosynthesis; heme A from heme O: step 1/1. Catalyzes the conversion of heme O to heme A by two successive hydroxylations of the methyl group at C8. The first hydroxylation forms heme I, the second hydroxylation results in an unstable dihydroxymethyl group, which spontaneously dehydrates, resulting in the formyl group of heme A. In Bartonella quintana (strain Toulouse) (Rochalimaea quintana), this protein is Heme A synthase.